Reading from the N-terminus, the 353-residue chain is 41 kDa protein (353 aa).

The tract at residues 132–197 (QSSHASALEQ…DNNSSDTIKD (66 aa)) is disordered. Over residues 157–169 (LDNKGKSDSENCN) the composition is skewed to basic and acidic residues.

This is 41 kDa protein from Lactobacillus helveticus (Lactobacillus suntoryeus).